A 280-amino-acid chain; its full sequence is Large ribosomal subunit protein uL2 (280 aa).

Disordered regions lie at residues 33 to 55 and 224 to 266; these read LTEG…RRRG and AMNP…KASQ. The span at 256 to 266 shows a compositional bias: basic residues; sequence TRTRNKNKASQ.

Belongs to the universal ribosomal protein uL2 family. As to quaternary structure, part of the 50S ribosomal subunit. Forms a bridge to the 30S subunit in the 70S ribosome.

Functionally, one of the primary rRNA binding proteins. Required for association of the 30S and 50S subunits to form the 70S ribosome, for tRNA binding and peptide bond formation. It has been suggested to have peptidyltransferase activity; this is somewhat controversial. Makes several contacts with the 16S rRNA in the 70S ribosome. The protein is Large ribosomal subunit protein uL2 of Ruegeria pomeroyi (strain ATCC 700808 / DSM 15171 / DSS-3) (Silicibacter pomeroyi).